Consider the following 104-residue polypeptide: Cytochrome c oxidase assembly factor 6 (104 aa).

Residues 1 to 22 (MGLFSFDGGKKESQPPNTRSQR) are disordered. In terms of domain architecture, CHCH spans 22–76 (RKLCWESRDAFFQCLDKADILDAMDPKNSKSIKSHCKVENEKFEENCAHSWIKYF). Residues 25–35 (CWESRDAFFQC) carry the Cx9C motif motif. 2 disulfides stabilise this stretch: cysteine 25/cysteine 68 and cysteine 35/cysteine 57. The Cx10C motif signature appears at 57-68 (CKVENEKFEENC).

The protein belongs to the cytochrome c oxidase subunit 6B family. In terms of assembly, interacts with COX2.

It localises to the cytoplasm. The protein localises to the nucleus. Its subcellular location is the mitochondrion intermembrane space. In terms of biological role, involved in the maturation of the mitochondrial respiratory chain complex IV subunit MT-CO2/COX2. Thereby, may regulate early steps of complex IV assembly. Mitochondrial respiratory chain complex IV or cytochrome c oxidase is the component of the respiratory chain that catalyzes the transfer of electrons from intermembrane space cytochrome c to molecular oxygen in the matrix and as a consequence contributes to the proton gradient involved in mitochondrial ATP synthesis. May also be required for efficient formation of respiratory supercomplexes comprised of complexes III and IV. The polypeptide is Cytochrome c oxidase assembly factor 6 (Saccharomyces cerevisiae (strain ATCC 204508 / S288c) (Baker's yeast)).